A 529-amino-acid chain; its full sequence is Cytochrome P450 monooxygenase ausG (529 aa).

Residues 31 to 51 form a helical membrane-spanning segment; the sequence is FLVTCGLPWLLLLFSVTIILF. Cysteine 470 is a binding site for heme.

The protein belongs to the cytochrome P450 family. Heme is required as a cofactor.

The protein localises to the membrane. It participates in secondary metabolite biosynthesis; terpenoid biosynthesis. Functionally, cytochrome P450 monooxygenase; part of the gene cluster B that mediates the biosynthesis of austinol and dehydroaustinol, two fungal meroterpenoids. The first step of the pathway is the synthesis of 3,5-dimethylorsellinic acid by the polyketide synthase ausA. 3,5-dimethylorsellinic acid is then prenylated by the polyprenyl transferase ausN. Further epoxidation by the FAD-dependent monooxygenase ausM and cyclization by the probable terpene cyclase ausL lead to the formation of protoaustinoid A. Protoaustinoid A is then oxidized to spiro-lactone preaustinoid A3 by the combined action of the FAD-binding monooxygenases ausB and ausC, and the dioxygenase ausE. Acid-catalyzed keto-rearrangement and ring contraction of the tetraketide portion of preaustinoid A3 by ausJ lead to the formation of preaustinoid A4. The aldo-keto reductase ausK, with the help of ausH, is involved in the next step by transforming preaustinoid A4 into isoaustinone which is in turn hydroxylated by the P450 monooxygenase ausI to form austinolide. Finally, the cytochrome P450 monooxygenase ausG modifies austinolide to austinol. Austinol can be further modified to dehydroaustinol which forms a diffusible complex with diorcinol that initiates conidiation. Due to genetic rearrangements of the clusters and the subsequent loss of some enzymes, the end products of the Emericella nidulans austinoid biosynthesis clusters are austinol and dehydroaustinol, even if additional enzymes, such as the O-acetyltransferase ausQ and the cytochrome P450 monooxygenase ausR are still functional. The polypeptide is Cytochrome P450 monooxygenase ausG (Emericella nidulans (strain FGSC A4 / ATCC 38163 / CBS 112.46 / NRRL 194 / M139) (Aspergillus nidulans)).